Here is a 430-residue protein sequence, read N- to C-terminus: Histidine--tRNA ligase (430 aa).

It belongs to the class-II aminoacyl-tRNA synthetase family. In terms of assembly, homodimer.

The protein resides in the cytoplasm. The catalysed reaction is tRNA(His) + L-histidine + ATP = L-histidyl-tRNA(His) + AMP + diphosphate + H(+). This Acinetobacter baumannii (strain ACICU) protein is Histidine--tRNA ligase.